The chain runs to 421 residues: Testin (421 aa).

The PET domain occupies 92–199; sequence MILTNPVAAK…GDVKLPCEMD (108 aa). The disordered stretch occupies residues 133-164; that stretch reads EKQPVAGSEGAQYRKKQLAKQLPAHDQDPSKC. Positions 155 to 164 are enriched in basic and acidic residues; the sequence is PAHDQDPSKC. 3 LIM zinc-binding domains span residues 234-297, 299-359, and 362-421; these read YSCY…CDSE, PRCA…NHAV, and QGCH…KMMS.

This sequence belongs to the prickle / espinas / testin family. Interacts via LIM domain 1 with ZYX. Interacts (via LIM domain 3) with ENAH and VASP. Interacts with ALKBH4, talin, actin, alpha-actinin, GRIP1 and PXN. Interacts (via LIM domain 2) with ACTL7A (via N-terminus). Heterodimer with ACTL7A; the heterodimer interacts with ENAH to form a heterotrimer.

The protein localises to the cytoplasm. Its subcellular location is the cell junction. It localises to the focal adhesion. In terms of biological role, scaffold protein that may play a role in cell adhesion, cell spreading and in the reorganization of the actin cytoskeleton. Plays a role in the regulation of cell proliferation. May act as a tumor suppressor. In Aotus nancymaae (Ma's night monkey), this protein is Testin (TES).